The chain runs to 513 residues: Proline-rich receptor-like protein kinase PERK3 (513 aa).

Over 1-123 (MARSNRCVPQ…SPPSPSRLST (123 aa)) the chain is Extracellular. A glycan (N-linked (GlcNAc...) asparagine) is linked at N11. Residues 27–36 (LKSRWQQITM) are compositionally biased toward polar residues. A disordered region spans residues 27–119 (LKSRWQQITM…GFSLSPPSPS (93 aa)). N-linked (GlcNAc...) asparagine glycosylation is present at N66. Residues 78 to 89 (PSTSTPPRLGNR) are compositionally biased toward low complexity. Positions 99 to 111 (GQEPTTPTMTPGF) are enriched in polar residues. Residues 124-144 (GAVVGISIGGGVFVLTLIFFL) form a helical membrane-spanning segment. At 145–513 (CKKKRPRDDK…TAQRYGGDSL (369 aa)) the chain is on the cytoplasmic side. T172 bears the Phosphothreonine mark. Residues 183–334 (FSEANLLGEG…DFGLAKIALD (152 aa)) form the Protein kinase domain. ATP contacts are provided by residues 189–197 (LGEGGFGFV) and K211. Y256 carries the phosphotyrosine modification. D307 (proton acceptor) is an active-site residue. Position 340 is a phosphoserine (S340). Residues T341 and T346 each carry the phosphothreonine modification. Y354 is subject to Phosphotyrosine.

The protein belongs to the protein kinase superfamily. Ser/Thr protein kinase family. As to expression, expressed at low levels in inflorescence bolt, flower buds, siliques, roots, seedlings and leaves.

The protein localises to the cell membrane. The catalysed reaction is L-seryl-[protein] + ATP = O-phospho-L-seryl-[protein] + ADP + H(+). It catalyses the reaction L-threonyl-[protein] + ATP = O-phospho-L-threonyl-[protein] + ADP + H(+). The protein is Proline-rich receptor-like protein kinase PERK3 (PERK3) of Arabidopsis thaliana (Mouse-ear cress).